Here is a 904-residue protein sequence, read N- to C-terminus: MSSSRVRPQAPQSPAASASASPPPHEGIEMEKMHHEEVGLGVPDETPSSPPTSSSRQAWSRDNPGFEPEEGMMEADWPPESQGRRSVSTTSSSSSGGVPGNFSGISARINRGLYPTPPAQEHRSCGKRILEKMRVLWDTRLLGESNSNREMYLKTVLREMITYILFLLTLCIITYGMVSTNMYYYTKVMSQLFLDTPLSSGEPTNFKSLSTMEDFWKFTEGPFLNGMYWELWYNNKSLPENQSLIYYENLLLGVPRLRQLRVRNESCSVHEDLRDEVYDCYNVYSPANEDKAPFGPKNGTAWRFKDESSLGESSYWGQVSTYGGGGYYQDLSRTREKSANQLQELKNNLWLDRGTRAVFLDFSIYNGNVNLFCIVRLLVEFPATGGAVPSWQFQTVRLLRYVSSWDYFVGMCEVSFCLFVLYYLVEEALEIRLHRLRYFKSLWNCLDVLIVALSVPAIIMNICRTSAVSHRLHFLLENHSTYPNFEPLARLQVHFNNLAAIIVFLSWVKLFKFINFNKTMNQLSTTMSRCAKDLMGFAIMFFIVFLAYAQLAYLVFGTQVNDFSTFQACIFTQFRIILGDFDFSEIEEADSVLGPIYFTTFVFFIFMILLNMFLAIINDTYSEVKADMAQQRSEMEITDLIKKSYNRAMVKLKLKKSSINDIPDSLQQAAGKLSFDELRQDLRGKGHSDAEIEAIFAKYDLDGDQELTEHEHQQMRDDLEKEREDLDLEHSSLPRPASGRSFSRSQDDSEEDDDEDSGHSSRRRGSSSGGVSYEEFQVLVRRVDRMEHSIGSIVSKIDAVIVKLEAMERAKMKRRDVLGRILDGVMEDERMGRDPELQREQMDRLVRDELERWESDDTMSQVSHHHHQATPIISSAQLRPRSSRPPSSLSNEGPDAAASGPAHL.

The disordered stretch occupies residues 1–102 (MSSSRVRPQA…SSSGGVPGNF (102 aa)). Residues 1–155 (MSSSRVRPQA…NSNREMYLKT (155 aa)) are Cytoplasmic-facing. The span at 8–20 (PQAPQSPAASASA) shows a compositional bias: low complexity. Over residues 26 to 38 (EGIEMEKMHHEEV) the composition is skewed to basic and acidic residues. Residues 86–96 (SVSTTSSSSSG) are compositionally biased toward low complexity. A helical membrane pass occupies residues 156-177 (VLREMITYILFLLTLCIITYGM). Over 178–404 (VSTNMYYYTK…TVRLLRYVSS (227 aa)) the chain is Extracellular. N-linked (GlcNAc...) asparagine glycosylation is found at asparagine 235, asparagine 241, and asparagine 264. Cysteine 267 and cysteine 280 are joined by a disulfide. N-linked (GlcNAc...) asparagine glycosylation occurs at asparagine 298. A helical transmembrane segment spans residues 405-425 (WDYFVGMCEVSFCLFVLYYLV). Topologically, residues 426-441 (EEALEIRLHRLRYFKS) are cytoplasmic. The chain crosses the membrane as a helical span at residues 442-462 (LWNCLDVLIVALSVPAIIMNI). Residues 463–489 (CRTSAVSHRLHFLLENHSTYPNFEPLA) are Extracellular-facing. The N-linked (GlcNAc...) asparagine glycan is linked to asparagine 478. The helical transmembrane segment at 490 to 510 (RLQVHFNNLAAIIVFLSWVKL) threads the bilayer. Topologically, residues 511 to 534 (FKFINFNKTMNQLSTTMSRCAKDL) are cytoplasmic. Residues 535-556 (MGFAIMFFIVFLAYAQLAYLVF) form a helical membrane-spanning segment. The Extracellular segment spans residues 557 to 568 (GTQVNDFSTFQA). The segment at residues 569–583 (CIFTQFRIILGDFDF) is an intramembrane region (pore-forming). Leucine 578 contacts Ca(2+). Residues 578-580 (LGD) carry the Selectivity filter motif. Over 584 to 591 (SEIEEADS) the chain is Extracellular. Residues 592-612 (VLGPIYFTTFVFFIFMILLNM) form a helical membrane-spanning segment. Residues 613–904 (FLAIINDTYS…DAAASGPAHL (292 aa)) lie on the Cytoplasmic side of the membrane. The region spanning 687-722 (HSDAEIEAIFAKYDLDGDQELTEHEHQQMRDDLEKE) is the EF-hand 1 domain. Ca(2+)-binding residues include aspartate 700, aspartate 702, aspartate 704, glutamate 706, and glutamate 711. The segment covering 708 to 732 (TEHEHQQMRDDLEKEREDLDLEHSS) has biased composition (basic and acidic residues). Disordered stretches follow at residues 708 to 770 (TEHE…SSGG) and 854 to 904 (ESDD…PAHL). The linker stretch occupies residues 740–759 (RSFSRSQDDSEEDDDEDSGH). One can recognise an EF-hand 2 domain in the interval 768-786 (SGGVSYEEFQVLVRRVDRM). Residues 770–809 (GVSYEEFQVLVRRVDRMEHSIGSIVSKIDAVIVKLEAMER) are a coiled coil. A compositionally biased stretch (low complexity) spans 878–890 (LRPRSSRPPSSLS).

This sequence belongs to the polycystin family. Homotetramer. Component of the heterotetrameric polycystin channel complex with pkd1; the tetramer contains one pkd1 chain and three pkd2 chains. Interacts with pkd1l1. Post-translationally, phosphorylated. Phosphorylation is important for protein function; a mutant human construct that lacks the N-terminal phosphorylation sites cannot complement a zebrafish pkd2-deficient mutant. In terms of processing, N-glycosylated. The four subunits in a tetramer probably differ in the extent of glycosylation; simultaneous glycosylation of all experimentally validated sites would probably create steric hindrance. Sumoylated by SUMO1; sumoylation regulates PKD2 membrane recycling. As to expression, detected along cilia and at the cilium basal body in Kupffer's vesicle at the 10 somite stage. Detected in heart at 48hpf. Detected in muscle and pronephric kidney at 48 hpf. Detected on trunk muscle sarcolemma and sarcomere, on ependymal cell cilia in brain, at the apical cell membrane in epithelial cells in the ear, at the lateral line organ and olfactory placode at 56 hpf. Detected in adult kidney (at protein level).

It is found in the basolateral cell membrane. It localises to the cell membrane. Its subcellular location is the sarcolemma. The protein localises to the cytoplasm. The protein resides in the myofibril. It is found in the sarcomere. It localises to the sarcoplasmic reticulum membrane. Its subcellular location is the apical cell membrane. The protein localises to the endoplasmic reticulum membrane. The protein resides in the cell projection. It is found in the cilium. It localises to the cytoskeleton. Its subcellular location is the cilium basal body. The protein localises to the cytoplasmic vesicle membrane. It catalyses the reaction K(+)(in) = K(+)(out). The enzyme catalyses Na(+)(in) = Na(+)(out). The catalysed reaction is Ca(2+)(in) = Ca(2+)(out). Its activity is regulated as follows. Channel activity is regulated by phosphorylation. Channel activity is regulated by intracellular Ca(2+). In terms of biological role, forms a nonselective cation channel. Can function as a homotetrameric ion channel or can form heteromer with PKD1. Displays distinct function depending on its subcellular localization and regulation by its binding partners. In the primary cilium functions as a cation channel, with a preference for monovalent cations over divalent cations that allows K(+), Na(+) and Ca(2+) influx, with low selectivity for Ca(2+). In the endoplasmic reticulum, likely functions as a K(+) channel to facilitate Ca(2+) release. Required for normal oscillation of Ca(2+) levels within cilia; these oscillations of the intraciliary Ca(2+) levels can trigger cytoplasmic Ca(2+) signaling cascades. Required for normal temporal variation of the intracellular Ca(2+) levels in the heart. Plays a role in fluid-flow mechanosensation. Required for normal specification of the body left-right axis during embryogenesis, most likely via its role in ciliary Ca(2+) oscillations in Kupffer's vesicle. The protein is Polycystin-2 of Danio rerio (Zebrafish).